The following is a 384-amino-acid chain: Anhydro-N-acetylmuramic acid kinase (384 aa).

Position 9 to 16 (9 to 16) interacts with ATP; the sequence is GTSADGVD.

It belongs to the anhydro-N-acetylmuramic acid kinase family.

The catalysed reaction is 1,6-anhydro-N-acetyl-beta-muramate + ATP + H2O = N-acetyl-D-muramate 6-phosphate + ADP + H(+). Its pathway is amino-sugar metabolism; 1,6-anhydro-N-acetylmuramate degradation. It participates in cell wall biogenesis; peptidoglycan recycling. Its function is as follows. Catalyzes the specific phosphorylation of 1,6-anhydro-N-acetylmuramic acid (anhMurNAc) with the simultaneous cleavage of the 1,6-anhydro ring, generating MurNAc-6-P. Is required for the utilization of anhMurNAc either imported from the medium or derived from its own cell wall murein, and thus plays a role in cell wall recycling. The polypeptide is Anhydro-N-acetylmuramic acid kinase (Synechococcus sp. (strain CC9311)).